The sequence spans 660 residues: MSKIFISCALPYANGPCHLGHIRSTYLPADIYARYNRMIDNDVLLVCATDEHGTPIAVKADKENKKPIEIAKRYHDMIVRDVESMNISLDNFTRTTDDLHYEIAQNFFLELYNKGLIYKKDIQQLYCEKCNKFLPDRYVEGICPVCGSEARGDHCEKCGRALEPTELDEPKCLTCGSTPVIKDTYQYFFKLSEFEDDLKDYIDNNENLPANVRNYAKNWLKEGLNDWVLTRDMDWGIPLPLDEAKGKVLYVWVEAFLGYISSAAQWSRETGIKWEDYWNDTAIHFIGKDIIYHHSIFWPGLLKAYGCKLPDNIYAGEFLSLEGEKMSTSKNWVVWIADFVDKFDPDLLRYYLTINAPLNKDTDFSWDDFQRRNNDELADVIGNFLHRTFTFTHKFFDGEIPEYKNPSAEDNKFKEIIEKLPDTVGEYISDFEFRDGLLEIYRVAKIGNKYFNDQEPWKAVKEDMQKAANCLYLSNQLAKTLAYVLKPYIPNKADAIAKIINLTTPDEWKDAKVPLAEGHKINKAKPLFTKIEDDVINKQKEELQKNLKESEDENMSDLISIDDFDKVVIKIGQVKEAEKIEKSDKLLKLQVDIGDETRQIVAGLAKQYAPEELIDRKVAVVVNLQPAKLFGTLSEGMILATGESAALLSPDECEVGERIQ.

Residues 11–21 carry the 'HIGH' region motif; the sequence is PYANGPCHLGH. Zn(2+) is bound by residues Cys-143, Cys-146, Cys-155, and Cys-158. Positions 325–329 match the 'KMSKS' region motif; that stretch reads KMSTS. ATP is bound at residue Thr-328. Residues 563-660 form the tRNA-binding domain; that stretch reads DFDKVVIKIG…DECEVGERIQ (98 aa).

This sequence belongs to the class-I aminoacyl-tRNA synthetase family. MetG type 1 subfamily. As to quaternary structure, homodimer. Requires Zn(2+) as cofactor.

It is found in the cytoplasm. It catalyses the reaction tRNA(Met) + L-methionine + ATP = L-methionyl-tRNA(Met) + AMP + diphosphate. Functionally, is required not only for elongation of protein synthesis but also for the initiation of all mRNA translation through initiator tRNA(fMet) aminoacylation. This is Methionine--tRNA ligase from Methanobrevibacter smithii (strain ATCC 35061 / DSM 861 / OCM 144 / PS).